We begin with the raw amino-acid sequence, 467 residues long: Transcriptional modulator WTM2 (467 aa).

Residues 1–12 (MAKSKSSQGASG) are compositionally biased toward low complexity. Disordered regions lie at residues 1 to 22 (MAKSKSSQGASGARRKPAPSLY) and 84 to 121 (TFYDDDDDDDNDDDDEEGNGKTKSAATPNPEYGDAFQD). Residues 87–100 (DDDDDDDNDDDDEE) are compositionally biased toward acidic residues. 3 WD repeats span residues 244–282 (PGTNVAHSVRFFNNHLFASCSDDNILRFWDTRTADKPLW), 287–327 (PKNG…LATT), and 349–389 (SGGD…SRND).

Transcriptional modulator with roles in meiotic regulation and silencing. In Saccharomyces cerevisiae (strain ATCC 204508 / S288c) (Baker's yeast), this protein is Transcriptional modulator WTM2 (WTM2).